Here is a 131-residue protein sequence, read N- to C-terminus: Meiotically up-regulated gene 115 protein (131 aa).

Its subcellular location is the mitochondrion. The protein localises to the nucleus. In terms of biological role, has a role in meiosis. In Schizosaccharomyces pombe (strain 972 / ATCC 24843) (Fission yeast), this protein is Meiotically up-regulated gene 115 protein (mug115).